The chain runs to 95 residues: MSDDNGSGNNCTTNHFLLYGSLGLGGLLLLLVIILFICLCGFSQRVKRLERNAQVSGQEPHYASLQQLPVSSSDITDMKEDLSTDYACIARSTPT.

The chain crosses the membrane as a helical span at residues 22-42; sequence LGLGGLLLLLVIILFICLCGF. S64 is subject to Phosphoserine.

This sequence belongs to the LST1 family. In terms of tissue distribution, expressed in spleen and at lower levels in thymus and liver.

Its subcellular location is the membrane. Its function is as follows. Possible role in modulating immune responses. Has an inhibitory effect on lymphocyte proliferation. Induces morphological changes including production of filopodia and microspikes when overexpressed in a variety of cell types and may be involved in dendritic cell maturation. In Mus musculus (Mouse), this protein is Leukocyte-specific transcript 1 protein (Lst1).